Here is a 216-residue protein sequence, read N- to C-terminus: Large ribosomal subunit protein uL1y (216 aa).

The protein belongs to the universal ribosomal protein uL1 family. Interacts with the GTPase NUG2.

This chain is Large ribosomal subunit protein uL1y (RPL10AB), found in Arabidopsis thaliana (Mouse-ear cress).